The following is a 404-amino-acid chain: Tryptophan synthase beta chain (404 aa).

K98 is modified (N6-(pyridoxal phosphate)lysine).

It belongs to the TrpB family. Tetramer of two alpha and two beta chains. The cofactor is pyridoxal 5'-phosphate.

The catalysed reaction is (1S,2R)-1-C-(indol-3-yl)glycerol 3-phosphate + L-serine = D-glyceraldehyde 3-phosphate + L-tryptophan + H2O. The protein operates within amino-acid biosynthesis; L-tryptophan biosynthesis; L-tryptophan from chorismate: step 5/5. Its function is as follows. The beta subunit is responsible for the synthesis of L-tryptophan from indole and L-serine. The sequence is that of Tryptophan synthase beta chain from Rhodopseudomonas palustris (strain HaA2).